We begin with the raw amino-acid sequence, 917 residues long: Protein translocase subunit SecA (917 aa).

ATP-binding positions include Gln87, 105 to 109 (GEGKT), and Asp516. Residues Cys901, Cys903, Cys912, and His913 each contribute to the Zn(2+) site.

This sequence belongs to the SecA family. Monomer and homodimer. Part of the essential Sec protein translocation apparatus which comprises SecA, SecYEG and auxiliary proteins SecDF-YajC and YidC. Requires Zn(2+) as cofactor.

It is found in the cell inner membrane. The protein resides in the cytoplasm. It catalyses the reaction ATP + H2O + cellular proteinSide 1 = ADP + phosphate + cellular proteinSide 2.. In terms of biological role, part of the Sec protein translocase complex. Interacts with the SecYEG preprotein conducting channel. Has a central role in coupling the hydrolysis of ATP to the transfer of proteins into and across the cell membrane, serving both as a receptor for the preprotein-SecB complex and as an ATP-driven molecular motor driving the stepwise translocation of polypeptide chains across the membrane. In Acidovorax ebreus (strain TPSY) (Diaphorobacter sp. (strain TPSY)), this protein is Protein translocase subunit SecA.